The chain runs to 308 residues: Ribosomal RNA small subunit methyltransferase H (308 aa).

S-adenosyl-L-methionine contacts are provided by residues 32–34, aspartate 51, phenylalanine 78, aspartate 99, and glutamine 106; that span reads GGH.

Belongs to the methyltransferase superfamily. RsmH family.

The protein resides in the cytoplasm. The catalysed reaction is cytidine(1402) in 16S rRNA + S-adenosyl-L-methionine = N(4)-methylcytidine(1402) in 16S rRNA + S-adenosyl-L-homocysteine + H(+). Specifically methylates the N4 position of cytidine in position 1402 (C1402) of 16S rRNA. This chain is Ribosomal RNA small subunit methyltransferase H, found in Campylobacter curvus (strain 525.92).